The following is a 583-amino-acid chain: Putative ABC transporter ATP-binding protein exp8 (583 aa).

Positions 25–308 constitute an ABC transmembrane type-1 domain; that stretch reads TFLALSFLLA…VTQNFSTLQT (284 aa). Transmembrane regions (helical) follow at residues 26–46, 61–81, 135–155, 159–179, and 259–279; these read FLAL…PLVA, AVTV…VQYV, MFSG…TTLY, VLDF…FLLV, and LGYA…GITV. One can recognise an ABC transporter domain in the interval 341–574; the sequence is IRFEHVCFSY…GGTYHKMYSL (234 aa). Residue 374 to 381 participates in ATP binding; that stretch reads GHTGSGKS.

Belongs to the ABC transporter superfamily.

The protein resides in the cell membrane. This Streptococcus pneumoniae serotype 4 (strain ATCC BAA-334 / TIGR4) protein is Putative ABC transporter ATP-binding protein exp8 (exp8).